Reading from the N-terminus, the 564-residue chain is Keratin, type II cytoskeletal 6A (564 aa).

A compositionally biased stretch (low complexity) spans 1–11; that stretch reads MASTSTTIRSH. Residues 1 to 23 form a disordered region; sequence MASTSTTIRSHSSSRRGFSANSA. A2 is subject to N-acetylalanine. Positions 2–162 are head; the sequence is ASTSTTIRSH…DPTIQRVRAE (161 aa). Positions 163–198 are coil 1A; the sequence is EREQIKTLNNKFASFIDKVRFLEQQNKVLETKWTLL. Positions 163–476 constitute an IF rod domain; that stretch reads EREQIKTLNN…KLLEGEECRL (314 aa). The interval 199-217 is linker 1; that stretch reads QEQGTKTVRQNLEPLFEQY. Positions 218–309 are coil 1B; it reads INNLRRQLDS…ALYDAELSQM (92 aa). Residues 310–333 form a linker 12 region; sequence QTHISDTSVVLSMDNNRNLDLDSI. The interval 334-472 is coil 2; the sequence is IAEVKAQYEE…ATYRKLLEGE (139 aa). Residues 473–564 form a tail region; the sequence is ECRLNGEGVG…SSSSRKSYKH (92 aa).

Belongs to the intermediate filament family. As to quaternary structure, heterodimer of a type I and a type II keratin. KRT6 isomers associate with KRT16 and/or KRT17. Interacts with TCHP. In terms of tissue distribution, expressed in the corneal epithelium (at protein level).

Epidermis-specific type I keratin involved in wound healing. Involved in the activation of follicular keratinocytes after wounding, while it does not play a major role in keratinocyte proliferation or migration. Participates in the regulation of epithelial migration by inhibiting the activity of SRC during wound repair. The protein is Keratin, type II cytoskeletal 6A (KRT6A) of Homo sapiens (Human).